A 129-amino-acid chain; its full sequence is M-zodatoxin-Lt8e (129 aa).

The first 20 residues, 1 to 20, serve as a signal peptide directing secretion; the sequence is MKYFVVALALVAAFVCIAES. The propeptide occupies 21-60; that stretch reads KPAESEHELAEVEEENELADLEDAVWLEHLADLSDLEEAR. A Processing quadruplet motif motif is present at residues 57-60; the sequence is EEAR.

Post-translationally, cleavage of the propeptide depends on the processing quadruplet motif (XXXR, with at least one of X being E). In terms of tissue distribution, expressed by the venom gland.

The protein resides in the secreted. Its function is as follows. Insecticidal, cytolytic and antimicrobial peptide. Forms voltage-dependent, ion-permeable channels in membranes. At high concentration causes cell membrane lysis. In Lachesana tarabaevi (Spider), this protein is M-zodatoxin-Lt8e (cit 1-5).